Here is a 142-residue protein sequence, read N- to C-terminus: Hemoglobin subunit beta-C (142 aa).

The Globin domain occupies 2-142 (PNKALITGFW…VASALAHRYH (141 aa)). Positions 59 and 88 each coordinate heme b.

Belongs to the globin family. As to quaternary structure, heterotetramer of two alpha chains and two beta chains. Red blood cells.

In terms of biological role, involved in oxygen transport from the lung to the various peripheral tissues. The protein is Hemoglobin subunit beta-C (HBBC) of Ovis aries (Sheep).